The chain runs to 306 residues: Phenylcoumaran benzylic ether reductase POP1 (306 aa).

NADP(+)-binding positions include 9–15 (GGTGYIG), arginine 34, and lysine 43. Residue lysine 131 is the Proton acceptor of the active site. NADP(+) is bound at residue arginine 135.

Belongs to the NmrA-type oxidoreductase family. Isoflavone reductase subfamily.

It carries out the reaction (-)-dehydrodiconiferyl alcohol + NADPH + H(+) = (S)-isodihydrodehydrodiconiferyl alcohol + NADP(+). The catalysed reaction is (+)-dehydrodiconiferyl alcohol + NADPH + H(+) = (R)-isodihydrodehydrodiconiferyl alcohol + NADP(+). It catalyses the reaction (2R,3S)-dihydrodehydrodiconiferyl alcohol + NADPH + H(+) = (S)-tetrahydrodehydrodiconiferyl alcohol + NADP(+). The enzyme catalyses (2S,3R)-dihydrodehydrodiconiferyl alcohol + NADPH + H(+) = (R)-tetrahydrodehydrodiconiferyl alcohol + NADP(+). Oxidoreductase involved in lignan biosynthesis. Catalyzes the NADPH-dependent reduction of phenylcoumaran benzylic ethers. Converts dehydrodiconiferyl alcohol (DDC) to isodihydrodehydrodiconiferyl alcohol (IDDDC), and dihydrodehydrodiconiferyl alcohol (DDDC) to tetrahydrodehydrodiconiferyl alcohol (TDDC). The polypeptide is Phenylcoumaran benzylic ether reductase POP1 (Populus trichocarpa (Western balsam poplar)).